A 625-amino-acid chain; its full sequence is MAU2 chromatid cohesion factor homolog (625 aa).

TPR repeat units lie at residues 96–129 (FDTA…SQNN), 451–484 (GGFY…ANAE), and 491–524 (SCSL…ASKI). Polar residues predominate over residues 600-611 (TVPTTETSTSAL). Residues 600–625 (TVPTTETSTSALQQPQQPAAQFGQFY) form a disordered region. Positions 612-625 (QQPQQPAAQFGQFY) are enriched in low complexity.

Belongs to the SCC4/mau-2 family. In terms of assembly, interacts with Nipped-B to form the cohesin loading complex.

The protein resides in the nucleus. It localises to the nucleoplasm. Functionally, required for association of the cohesin complex with chromatin during interphase. Plays a role in sister chromatid cohesion and normal progression through prometaphase. The polypeptide is MAU2 chromatid cohesion factor homolog (Drosophila mojavensis (Fruit fly)).